Consider the following 383-residue polypeptide: 8-amino-7-oxononanoate synthase (383 aa).

R22 lines the substrate pocket. 109 to 110 (GF) is a pyridoxal 5'-phosphate binding site. A substrate-binding site is contributed by H134. Pyridoxal 5'-phosphate is bound by residues S178, H206, and T232. The residue at position 235 (K235) is an N6-(pyridoxal phosphate)lysine. T348 contributes to the substrate binding site.

Belongs to the class-II pyridoxal-phosphate-dependent aminotransferase family. BioF subfamily. In terms of assembly, homodimer. Pyridoxal 5'-phosphate serves as cofactor.

It catalyses the reaction 6-carboxyhexanoyl-[ACP] + L-alanine + H(+) = (8S)-8-amino-7-oxononanoate + holo-[ACP] + CO2. The protein operates within cofactor biosynthesis; biotin biosynthesis. Functionally, catalyzes the decarboxylative condensation of pimeloyl-[acyl-carrier protein] and L-alanine to produce 8-amino-7-oxononanoate (AON), [acyl-carrier protein], and carbon dioxide. This Vibrio campbellii (strain ATCC BAA-1116) protein is 8-amino-7-oxononanoate synthase.